A 305-amino-acid chain; its full sequence is Olfactory receptor 4B13 (305 aa).

Residues 1-25 lie on the Extracellular side of the membrane; it reads MANKNNVTELIFTGLFQDPEVQKVC. Asn-6 carries N-linked (GlcNAc...) asparagine glycosylation. The helical transmembrane segment at 26–46 threads the bilayer; it reads FVLFLPVYLATLLGNSLILVA. Residues 47–55 lie on the Cytoplasmic side of the membrane; it reads VSISKTLHS. Residues 56 to 76 traverse the membrane as a helical segment; it reads PMYFFLSSLSLVEICYSSTIV. Topologically, residues 77–95 are extracellular; the sequence is PKFITDLLAKVKTISLKGC. An intrachain disulfide couples Cys-95 to Cys-187. Residues 96–116 form a helical membrane-spanning segment; sequence LTQIFFSHFFGVVEVILLVVM. The Cytoplasmic portion of the chain corresponds to 117–141; the sequence is AYDRYVAICKPLHYMNIMSRQVCHM. The helical transmembrane segment at 142-162 threads the bilayer; it reads LVAGSWLGGFIHSIIQIIITI. Residues 163–202 are Extracellular-facing; that stretch reads PLPFCGPNVIDHYFCDLQQLFKLACTDTFMEGFIVMANSG. A helical transmembrane segment spans residues 203 to 223; the sequence is LISIVSLFILVSSYAVILISL. Residues 224–236 are Cytoplasmic-facing; the sequence is RKRSAEGRRKALS. The helical transmembrane segment at 237-257 threads the bilayer; it reads TCASHITVVILFFVPGAFIYM. At 258-266 the chain is on the extracellular side; the sequence is RPSSTFTED. Residues 267 to 287 traverse the membrane as a helical segment; the sequence is KLVSVFYTVITPMLNPIVYTL. Topologically, residues 288–305 are cytoplasmic; it reads RNTEMKNAIRMSWKQKDS.

Belongs to the G-protein coupled receptor 1 family.

The protein localises to the cell membrane. Odorant receptor. This is Olfactory receptor 4B13 from Mus musculus (Mouse).